A 707-amino-acid polypeptide reads, in one-letter code: Polyribonucleotide nucleotidyltransferase (707 aa).

Mg(2+) is bound by residues D485 and D491. Residues 552–615 form the KH domain; the sequence is PRITVINIPK…AAIKWIKGIV (64 aa). Residues 621 to 689 form the S1 motif domain; it reads GEIYEGKVVK…DRGKVKLSMK (69 aa).

Belongs to the polyribonucleotide nucleotidyltransferase family. The cofactor is Mg(2+).

It localises to the cytoplasm. The catalysed reaction is RNA(n+1) + phosphate = RNA(n) + a ribonucleoside 5'-diphosphate. Involved in mRNA degradation. Catalyzes the phosphorolysis of single-stranded polyribonucleotides processively in the 3'- to 5'-direction. This Rhodospirillum centenum (strain ATCC 51521 / SW) protein is Polyribonucleotide nucleotidyltransferase.